Reading from the N-terminus, the 361-residue chain is Very-long-chain 3-oxoacyl-CoA reductase (361 aa).

Residues 32–52 (PALILSTVGAAFLLRYTLSIF) traverse the membrane as a helical segment. The NADP(+) site is built by Val79, Asp133, Asn163, Arg198, Tyr236, Lys240, Val269, and Ser271. The active-site Proton donor is Tyr236. Lys240 serves as the catalytic Lowers pKa of active site Tyr.

This sequence belongs to the short-chain dehydrogenases/reductases (SDR) family.

Its subcellular location is the endoplasmic reticulum membrane. It carries out the reaction a very-long-chain (3R)-3-hydroxyacyl-CoA + NADP(+) = a very-long-chain 3-oxoacyl-CoA + NADPH + H(+). It functions in the pathway lipid metabolism; fatty acid biosynthesis. Its function is as follows. Component of the microsomal membrane bound fatty acid elongation system, which produces the 26-carbon very long-chain fatty acids (VLCFA) from palmitate. Catalyzes the reduction of the 3-ketoacyl-CoA intermediate that is formed in each cycle of fatty acid elongation. VLCFAs serve as precursors for ceramide and sphingolipids. This is Very-long-chain 3-oxoacyl-CoA reductase from Cryptococcus neoformans var. neoformans serotype D (strain B-3501A) (Filobasidiella neoformans).